The sequence spans 551 residues: Tetrachloroethene reductive dehalogenase (551 aa).

Residues Met1–Ala39 constitute a signal peptide (tat-type signal). One can recognise a 4Fe-4S ferredoxin-type 1 domain in the interval Pro411–Asp440. Residues Cys420, Cys423, Cys426, Cys430, Cys467, Cys478, Cys481, and Cys485 each coordinate [4Fe-4S] cluster. The 4Fe-4S ferredoxin-type 2 domain maps to Cys478–Asp496.

Belongs to the PceA family. It depends on [4Fe-4S] cluster as a cofactor. Requires corrinoid as cofactor. Post-translationally, predicted to be exported by the Tat system. The position of the signal peptide cleavage has been experimentally proven.

It localises to the cell membrane. It carries out the reaction trichloroethene + chloride + A + H(+) = tetrachloroethene + AH2. The enzyme catalyses trichloroethene + AH2 = (Z)-1,2-dichloroethene + chloride + A + H(+). Its function is as follows. Catalyzes the reductive dechlorination of tetrachloroethene (PCE) to trichloroethene (TCE) and of trichloroethene to cis-1,2-dichloroethene (DCE). Reduced methyl viologen can act as the artificial electron donor. The protein is Tetrachloroethene reductive dehalogenase of Desulfitobacterium hafniense (Desulfitobacterium frappieri).